We begin with the raw amino-acid sequence, 211 residues long: Uracil phosphoribosyltransferase (211 aa).

Residues Arg-81, Arg-106, and 133–141 (DPMLATGNS) each bind 5-phospho-alpha-D-ribose 1-diphosphate. Uracil is bound by residues Ile-196 and 201-203 (GDA). Asp-202 is a binding site for 5-phospho-alpha-D-ribose 1-diphosphate.

This sequence belongs to the UPRTase family. Mg(2+) serves as cofactor.

The catalysed reaction is UMP + diphosphate = 5-phospho-alpha-D-ribose 1-diphosphate + uracil. It functions in the pathway pyrimidine metabolism; UMP biosynthesis via salvage pathway; UMP from uracil: step 1/1. Its activity is regulated as follows. Allosterically activated by GTP. Catalyzes the conversion of uracil and 5-phospho-alpha-D-ribose 1-diphosphate (PRPP) to UMP and diphosphate. This Myxococcus xanthus (strain DK1622) protein is Uracil phosphoribosyltransferase.